Consider the following 80-residue polypeptide: Teretoxin Tsu6.5 (80 aa).

A signal peptide spans 1–21 (MAINGRLLCLCLVLGLVFESL). A propeptide spanning residues 22 to 42 (GHPSVQEKRAAEDSKPSGERR) is cleaved from the precursor.

Belongs to the teretoxin M (TM) superfamily. In terms of processing, contains 3 disulfide bonds. Expressed by the venom duct.

The protein localises to the secreted. This is Teretoxin Tsu6.5 from Terebra subulata (Chocolate spotted auger).